Here is a 202-residue protein sequence, read N- to C-terminus: Proteasome subunit beta 1 (202 aa).

A propeptide (removed in mature form; by autocatalysis) is located at residue Met1. Residue Thr2 is the Nucleophile of the active site.

This sequence belongs to the peptidase T1B family. In terms of assembly, the 20S proteasome core is composed of 14 alpha and 14 beta subunits that assemble into four stacked heptameric rings, resulting in a barrel-shaped structure. The two inner rings, each composed of seven catalytic beta subunits, are sandwiched by two outer rings, each composed of seven alpha subunits. The catalytic chamber with the active sites is on the inside of the barrel. Has a gated structure, the ends of the cylinder being occluded by the N-termini of the alpha-subunits. Is capped at one or both ends by the proteasome regulatory ATPase, PAN.

The protein localises to the cytoplasm. The enzyme catalyses Cleavage of peptide bonds with very broad specificity.. Its activity is regulated as follows. The formation of the proteasomal ATPase PAN-20S proteasome complex, via the docking of the C-termini of PAN into the intersubunit pockets in the alpha-rings, triggers opening of the gate for substrate entry. Interconversion between the open-gate and close-gate conformations leads to a dynamic regulation of the 20S proteasome proteolysis activity. In terms of biological role, component of the proteasome core, a large protease complex with broad specificity involved in protein degradation. The protein is Proteasome subunit beta 1 of Pyrobaculum arsenaticum (strain DSM 13514 / JCM 11321 / PZ6).